Reading from the N-terminus, the 116-residue chain is Protein lin-52 homolog (116 aa).

2 positions are modified to phosphoserine: serine 28 and serine 53.

This sequence belongs to the lin-52 family. As to quaternary structure, component of the DREAM complex (also named LINC complex) at least composed of E2F4, E2F5, LIN9, LIN37, LIN52, LIN54, MYBL1, MYBL2, RBL1, RBL2, RBBP4, TFDP1 and TFDP2. The complex exists in quiescent cells where it represses cell cycle-dependent genes. It dissociates in S phase when LIN9, LIN37, LIN52 and LIN54 form a subcomplex that binds to MYBL2.

The protein is Protein lin-52 homolog (LIN52) of Homo sapiens (Human).